Here is a 248-residue protein sequence, read N- to C-terminus: Segregation and condensation protein A (248 aa).

Belongs to the ScpA family. As to quaternary structure, component of a cohesin-like complex composed of ScpA, ScpB and the Smc homodimer, in which ScpA and ScpB bind to the head domain of Smc. The presence of the three proteins is required for the association of the complex with DNA.

It is found in the cytoplasm. Its function is as follows. Participates in chromosomal partition during cell division. May act via the formation of a condensin-like complex containing Smc and ScpB that pull DNA away from mid-cell into both cell halves. In Clostridium perfringens (strain SM101 / Type A), this protein is Segregation and condensation protein A.